Consider the following 253-residue polypeptide: Imidazole glycerol phosphate synthase subunit HisF (253 aa).

Active-site residues include Asp11 and Asp130.

This sequence belongs to the HisA/HisF family. Heterodimer of HisH and HisF.

The protein resides in the cytoplasm. The catalysed reaction is 5-[(5-phospho-1-deoxy-D-ribulos-1-ylimino)methylamino]-1-(5-phospho-beta-D-ribosyl)imidazole-4-carboxamide + L-glutamine = D-erythro-1-(imidazol-4-yl)glycerol 3-phosphate + 5-amino-1-(5-phospho-beta-D-ribosyl)imidazole-4-carboxamide + L-glutamate + H(+). It participates in amino-acid biosynthesis; L-histidine biosynthesis; L-histidine from 5-phospho-alpha-D-ribose 1-diphosphate: step 5/9. In terms of biological role, IGPS catalyzes the conversion of PRFAR and glutamine to IGP, AICAR and glutamate. The HisF subunit catalyzes the cyclization activity that produces IGP and AICAR from PRFAR using the ammonia provided by the HisH subunit. The chain is Imidazole glycerol phosphate synthase subunit HisF from Acidithiobacillus ferrooxidans (strain ATCC 23270 / DSM 14882 / CIP 104768 / NCIMB 8455) (Ferrobacillus ferrooxidans (strain ATCC 23270)).